The chain runs to 101 residues: Small ribosomal subunit protein cS23 (101 aa).

It belongs to the chloroplast-specific ribosomal protein cS23 family. As to quaternary structure, part of the 30S ribosomal subunit.

The protein localises to the plastid. It is found in the chloroplast. Probably a ribosomal protein or a ribosome-associated protein. This is Small ribosomal subunit protein cS23 (ycf65) from Euglena mutabilis.